Consider the following 143-residue polypeptide: MGKCRGLRTARKLRNHRREQKWHDKQYKKAHLGTALKANPFGSASHAKGIVLEKVGVEAKQPNSAIRKCVRVQLIKNGKKITAFVPNDGCLNFXEENDEVLVAGFGRKXHAVGDIPGVRFKVVEMANVSLLALYKGXKERPKS.

Belongs to the universal ribosomal protein uS12 family. In terms of assembly, component of the 40S small ribosomal subunit.

The protein resides in the cytoplasm. The protein localises to the cytosol. Its subcellular location is the rough endoplasmic reticulum. The sequence is that of Small ribosomal subunit protein uS12 (rps23) from Gillichthys mirabilis (Long-jawed mudsucker).